Here is a 156-residue protein sequence, read N- to C-terminus: Small ribosomal subunit protein uS7 (156 aa).

This sequence belongs to the universal ribosomal protein uS7 family. Part of the 30S ribosomal subunit. Contacts proteins S9 and S11.

Functionally, one of the primary rRNA binding proteins, it binds directly to 16S rRNA where it nucleates assembly of the head domain of the 30S subunit. Is located at the subunit interface close to the decoding center, probably blocks exit of the E-site tRNA. The sequence is that of Small ribosomal subunit protein uS7 from Rhizobium meliloti (strain 1021) (Ensifer meliloti).